The chain runs to 307 residues: Heme A synthase (307 aa).

Residues 1–8 (MQHNRYLK) are Cytoplasmic-facing. A helical membrane pass occupies residues 9-29 (WFAVAATVGMLLILLGGALVT). Residues 30–56 (KTDSGLGCGRNWPDCNGSLIPKEITPE) are Extracellular-facing. The cysteines at positions 37 and 44 are disulfide-linked. The helical transmembrane segment at 57 to 77 (VLIEFSHRLVTGVVSISILVL) threads the bilayer. The active site involves Glu60. Heme o is bound at residue His63. The Cytoplasmic portion of the chain corresponds to 78–92 (TVWTWRKLGHIREVK). Residues 93 to 113 (LLGFLAMFFLIAQALIGAAQV) form a helical membrane-spanning segment. At 114–123 (LWGQGDFILA) the chain is on the extracellular side. The helical transmembrane segment at 124-144 (LHFGISLISFAAVLLLSMIVF) threads the bilayer. His125 contributes to the heme o binding site. Residues 145 to 161 (EVDRKFDADNVFIGKKL) lie on the Cytoplasmic side of the membrane. Residues 162-182 (RWHTIAVTIYSYLVVYTGALV) traverse the membrane as a helical segment. Over 183–218 (RHTDSSLICPDWPFCYNETPLASPNNMYEWVQMGHR) the chain is Extracellular. An intrachain disulfide couples Cys191 to Cys197. His217 is a heme b binding site. Residues 219 to 239 (LAVLIIFIWIAYITWHAVKEY) traverse the membrane as a helical segment. Topologically, residues 240-247 (KNQRVVYY) are cytoplasmic. The chain crosses the membrane as a helical span at residues 248–268 (GWIIAFTIVFLQVIAGMLVVL). The Extracellular portion of the chain corresponds to 269-276 (TKLNLTVA). The chain crosses the membrane as a helical span at residues 277–297 (LMHSLLISLLFGLLCYMIMLV). Residue His279 coordinates heme b. The Cytoplasmic portion of the chain corresponds to 298–307 (ARSNYNEKMK).

Belongs to the COX15/CtaA family. Type 1 subfamily. As to quaternary structure, interacts with CtaB. It depends on heme b as a cofactor.

It localises to the cell membrane. It catalyses the reaction Fe(II)-heme o + 2 A + H2O = Fe(II)-heme a + 2 AH2. It functions in the pathway porphyrin-containing compound metabolism; heme A biosynthesis; heme A from heme O: step 1/1. In terms of biological role, catalyzes the conversion of heme O to heme A by two successive hydroxylations of the methyl group at C8. The first hydroxylation forms heme I, the second hydroxylation results in an unstable dihydroxymethyl group, which spontaneously dehydrates, resulting in the formyl group of heme A. The polypeptide is Heme A synthase (Lysinibacillus sphaericus (strain C3-41)).